A 128-amino-acid polypeptide reads, in one-letter code: Large ribosomal subunit protein uL22 (128 aa).

The protein belongs to the universal ribosomal protein uL22 family. Part of the 50S ribosomal subunit.

This protein binds specifically to 23S rRNA; its binding is stimulated by other ribosomal proteins, e.g. L4, L17, and L20. It is important during the early stages of 50S assembly. It makes multiple contacts with different domains of the 23S rRNA in the assembled 50S subunit and ribosome. Its function is as follows. The globular domain of the protein is located near the polypeptide exit tunnel on the outside of the subunit, while an extended beta-hairpin is found that lines the wall of the exit tunnel in the center of the 70S ribosome. The sequence is that of Large ribosomal subunit protein uL22 from Rhodopseudomonas palustris (strain HaA2).